Consider the following 313-residue polypeptide: Malate dehydrogenase (313 aa).

NAD(+) is bound by residues glycine 8 to glycine 13 and aspartate 33. Residues arginine 83 and arginine 89 each contribute to the substrate site. Residues asparagine 96 and isoleucine 119 to asparagine 121 contribute to the NAD(+) site. Substrate-binding residues include asparagine 121 and arginine 152. Histidine 176 (proton acceptor) is an active-site residue.

The protein belongs to the LDH/MDH superfamily. MDH type 3 family.

The enzyme catalyses (S)-malate + NAD(+) = oxaloacetate + NADH + H(+). Functionally, catalyzes the reversible oxidation of malate to oxaloacetate. This Bacteroides fragilis (strain ATCC 25285 / DSM 2151 / CCUG 4856 / JCM 11019 / LMG 10263 / NCTC 9343 / Onslow / VPI 2553 / EN-2) protein is Malate dehydrogenase.